The following is a 341-amino-acid chain: UDP-3-O-acylglucosamine N-acyltransferase 2 (341 aa).

The active-site Proton acceptor is H254.

Belongs to the transferase hexapeptide repeat family. LpxD subfamily. Homotrimer.

It catalyses the reaction a UDP-3-O-[(3R)-3-hydroxyacyl]-alpha-D-glucosamine + a (3R)-hydroxyacyl-[ACP] = a UDP-2-N,3-O-bis[(3R)-3-hydroxyacyl]-alpha-D-glucosamine + holo-[ACP] + H(+). It functions in the pathway bacterial outer membrane biogenesis; LPS lipid A biosynthesis. Its function is as follows. Catalyzes the N-acylation of UDP-3-O-acylglucosamine using 3-hydroxyacyl-ACP as the acyl donor. Is involved in the biosynthesis of lipid A, a phosphorylated glycolipid that anchors the lipopolysaccharide to the outer membrane of the cell. In Nitrobacter winogradskyi (strain ATCC 25391 / DSM 10237 / CIP 104748 / NCIMB 11846 / Nb-255), this protein is UDP-3-O-acylglucosamine N-acyltransferase 2.